The primary structure comprises 478 residues: Zinc metalloproteinase/disintegrin (478 aa).

Positions 1–20 (MIQVLLVTICLAAFPYQGSS) are cleaved as a signal peptide. Positions 21–187 (IILESGNVND…PIKKASDLNL (167 aa)) are excised as a propeptide. One can recognise a Peptidase M12B domain in the interval 193–389 (RYVELFIVVD…QKPQCILKKP (197 aa)). 3 cysteine pairs are disulfide-bonded: Cys304–Cys384, Cys344–Cys368, and Cys346–Cys351. Residue His329 participates in Zn(2+) binding. Residue Glu330 is part of the active site. The Zn(2+) site is built by His333 and His339. Positions 390-407 (LRTDTVSTPVSGNELLEA) are excised as a propeptide. Residues 397–478 (TPVSGNELLE…ADCPRNGLYG (82 aa)) enclose the Disintegrin domain. 6 cysteine pairs are disulfide-bonded: Cys411–Cys426, Cys413–Cys421, Cys420–Cys443, Cys434–Cys440, Cys439–Cys464, and Cys452–Cys471. The Cell attachment site; atypical (MVD) signature appears at 456–458 (MVD).

This sequence belongs to the venom metalloproteinase (M12B) family. P-II subfamily. P-IIa sub-subfamily. As to quaternary structure, monomer (disintegrin). The cofactor is Zn(2+). Expressed by the venom gland.

The protein localises to the secreted. The catalysed reaction is Cleavage of 3-Asn-|-Gln-4, 9-Ser-|-His-10 and 14-Ala-|-Leu-15 bonds in insulin B chain and 14-Tyr-|-Gln-15 and 8-Thr-|-Ser-9 in A chain. Cleaves type IV collagen at 73-Ala-|-Gln-74 in alpha1-(IV) and at 7-Gly-|-Leu-8 in alpha2-(IV).. Its function is as follows. Snake venom zinc metalloproteinase that causes hemorrhage by provoking the degradation of the sub-endothelial matrix proteins (fibronectin, laminin, type IV collagen, nidogen, and gelatins). Potent inhibitor of both collagen- (IC(50)=4 nM) and ADP-induced (IC(50)=8 nM) platelet aggregation. May act by binding to the platelet receptor GPIIb/GPIIIa (ITGA2B/ITGB3). The protein is Zinc metalloproteinase/disintegrin of Crotalus atrox (Western diamondback rattlesnake).